The primary structure comprises 730 residues: Nitrogen fixation protein FixI (730 aa).

The Cytoplasmic segment spans residues Met-1–Arg-101. The 67-residue stretch at Lys-19–Tyr-85 folds into the HMA domain. A metal cation-binding residues include Cys-30 and Cys-33. The chain crosses the membrane as a helical span at residues Phe-102–Pro-123. The Extracellular portion of the chain corresponds to Val-124–Asp-138. Residues Phe-139–Ser-162 traverse the membrane as a helical segment. Residues Ala-163–Ser-168 are Cytoplasmic-facing. The helical transmembrane segment at Ala-169–Val-190 threads the bilayer. At Val-191–Phe-202 the chain is on the extracellular side. Residues Asp-203–Arg-223 traverse the membrane as a helical segment. Topologically, residues Arg-224–Arg-352 are cytoplasmic. Residues Ala-353–Ala-375 traverse the membrane as a helical segment. Residues Gly-376 to Ala-382 lie on the Extracellular side of the membrane. Residues Ile-383–Leu-400 traverse the membrane as a helical segment. At Ala-401–Met-676 the chain is on the cytoplasmic side. Asp-438 acts as the 4-aspartylphosphate intermediate in catalysis. Mg(2+) contacts are provided by Asp-622 and Asp-626. A helical transmembrane segment spans residues Arg-677 to Ser-696. Residues Gly-697–Pro-701 lie on the Extracellular side of the membrane. Residues Leu-702–Leu-720 form a helical membrane-spanning segment. The Cytoplasmic segment spans residues Arg-721–Val-730.

It belongs to the cation transport ATPase (P-type) (TC 3.A.3) family. Type IB subfamily.

It is found in the cell membrane. It catalyses the reaction ATP + H2O = ADP + phosphate + H(+). In terms of biological role, fixI is a pump of a specific cation involved in symbiotic nitrogen fixation. The four proteins FixG, FixH, FixI, and FixS may participate in a membrane-bound complex coupling the FixI cation pump with a redox process catalyzed by FixG. This Bradyrhizobium diazoefficiens (strain JCM 10833 / BCRC 13528 / IAM 13628 / NBRC 14792 / USDA 110) protein is Nitrogen fixation protein FixI (fixI).